The chain runs to 321 residues: WD repeat-containing protein VIP3 (321 aa).

WD repeat units follow at residues 12-55 (AHED…LVRT), 58-97 (GHSLGVAALAAHPSGIIAASSSIDSFVRVFDVDTNATIAV), 100-140 (APPS…LIST), 156-195 (SSKKFVLSVAWSPNGKRLACGSMDGTICVFDVDRSKLLHQ), 198-238 (GHNM…LLGS), 241-280 (GHTSWVLSVDASPDGGAIATGSSDRTVRLWDLKMRAAIQT), and 283-319 (NHNDQVWSVAFRPPGGTGVRAGRLASVSDDKSVSLYD).

As to quaternary structure, component of the nuclear PAF1 complex (PAF1C), which consists of VIP2/ELF7/PAF1, VIP3/SKI8/WDR61, VIP4/LEO1, VIP5/RTF1, VIP6/ELF8/CTR9 and CDC73. Component of the cytoplasmic SKI complex, which consists of SKI2, SKI3 and VIP3/SKI8. Interacts with VIP4 and VIP6.

It is found in the nucleus. The protein localises to the cytoplasm. Functionally, component of the PAF1 complex (PAF1C) which is involved in histone modifications such as methylation on histone H3 'Lys-4' (H3K4me3). Involved in regulation of flowering time. Required for the expression of the flowering repressor and MADS box gene FLC. Required for histone H3 trimethylation on 'Lys-4' (H3K4me3) and histone dimethylation on 'Lys-36' (H3K36me2) at the FLC locus. Prevents trimethylation on 'Lys-27' (H3K27me3) at the same locus. Not required for meiotic recombination or progression. Component of the SKI complex which is thought to be involved in exosome-mediated RNA decay and associates with transcriptionally active genes in a manner dependent on PAF1 complex (PAF1C). Required for proper progression of cell differentiation process. In Arabidopsis thaliana (Mouse-ear cress), this protein is WD repeat-containing protein VIP3.